Reading from the N-terminus, the 120-residue chain is Large ribosomal subunit protein bL20 (120 aa).

The protein belongs to the bacterial ribosomal protein bL20 family.

Binds directly to 23S ribosomal RNA and is necessary for the in vitro assembly process of the 50S ribosomal subunit. It is not involved in the protein synthesizing functions of that subunit. This chain is Large ribosomal subunit protein bL20, found in Desulforudis audaxviator (strain MP104C).